The chain runs to 301 residues: MITPIAVVGPTASGKSALGIELALRLDGEVVNVDSMQLYRGMDIGTAKLTPEERQGIPHHQLDVLDVTETASVARYQQEAVADVEEIMSRGKTPILVGGSMLYVQSLVDDWQFPPTDPAVRARWEARLAEIGVTRLHEELRARDPEAAAIIENNDPRRTVRALEVIELTGQPFKASQPPKDAPPRWGTTILGLRTTADWLNPRIELRTHLMFERGFLEEVEGLVRDHGLIAESTAGRAIGYAQVLDALAGELTLDEAVERTITGTRRYVRRQRAWFNRDHRIRWIDADGDTTARALDILGR.

9 to 16 is an ATP binding site; sequence GPTASGKS. 11-16 is a binding site for substrate; that stretch reads TASGKS. Residues 34–37 are interaction with substrate tRNA; sequence DSMQ.

Belongs to the IPP transferase family. In terms of assembly, monomer. It depends on Mg(2+) as a cofactor.

The catalysed reaction is adenosine(37) in tRNA + dimethylallyl diphosphate = N(6)-dimethylallyladenosine(37) in tRNA + diphosphate. Functionally, catalyzes the transfer of a dimethylallyl group onto the adenine at position 37 in tRNAs that read codons beginning with uridine, leading to the formation of N6-(dimethylallyl)adenosine (i(6)A). The protein is tRNA dimethylallyltransferase of Corynebacterium efficiens (strain DSM 44549 / YS-314 / AJ 12310 / JCM 11189 / NBRC 100395).